Reading from the N-terminus, the 4568-residue chain is Dynein beta chain, flagellar outer arm (4568 aa).

Residues 1–1880 (MAEDEGMTAA…QVNICDAEIA (1880 aa)) are stem. 5 coiled-coil regions span residues 277–293 (FQRLFREVEAAQQEAND), 1158–1175 (EEAAAKKAAEEEEKRKAL), 1372–1400 (KIDVDFLVEETKKLSKDIKMLNKAVRNYD), 1614–1650 (EACTLDGRQERLENMQSMLEQCEKALQEYLETKRVAF), and 1778–1825 (QEIN…RKKL). The tract at residues 1144 to 1166 (GVEEEPEYHPDQDPEEAAAKKAA) is disordered. The segment covering 1150–1166 (EYHPDQDPEEAAAKKAA) has biased composition (basic and acidic residues). AAA stretches follow at residues 1881–2102 (YSYE…TLYV), 2164–2385 (EAAH…RNFK), 2493–2738 (QYIP…ITQG), and 2841–3090 (EYNE…FRRY). Residues 1919-1926 (GPAGTGKT), 2202-2209 (GAAGCGKT), and 2530-2537 (GNTGTGKS) each bind ATP. Positions 2831-2848 (LRKTLEDKLREYNESNAV) form a coiled coil. Position 2879 to 2886 (2879 to 2886 (GVGGSGKQ)) interacts with ATP. 3 coiled-coil regions span residues 3106-3162 (KMLL…DELI), 3339-3425 (KRAA…RLES), and 3648-3728 (HERP…KARE). A stalk region spans residues 3106–3425 (KMLLQLKRDD…WGAEIKRLES (320 aa)). AAA regions lie at residues 3481–3711 (LTDD…EIEE) and 3937–4172 (MGRF…TANN).

The protein belongs to the dynein heavy chain family. In terms of assembly, consists of at least 3 heavy chains (alpha, beta and gamma), 2 intermediate chains and 8 light chains.

It is found in the cell projection. The protein resides in the cilium. The protein localises to the flagellum. Its subcellular location is the cytoplasm. It localises to the cytoskeleton. It is found in the flagellum axoneme. In terms of biological role, force generating protein of eukaryotic cilia and flagella. Produces force towards the minus ends of microtubules. Dynein has ATPase activity; the force-producing power stroke is thought to occur on release of ADP. This Chlamydomonas reinhardtii (Chlamydomonas smithii) protein is Dynein beta chain, flagellar outer arm (ODA4).